The chain runs to 188 residues: dCTP deaminase (188 aa).

109 to 114 (KSTYAR) serves as a coordination point for dCTP. Glu-135 (proton donor/acceptor) is an active-site residue. Residues Gln-154, Tyr-168, and Gln-178 each contribute to the dCTP site.

It belongs to the dCTP deaminase family. As to quaternary structure, homotrimer.

The catalysed reaction is dCTP + H2O + H(+) = dUTP + NH4(+). It participates in pyrimidine metabolism; dUMP biosynthesis; dUMP from dCTP (dUTP route): step 1/2. Functionally, catalyzes the deamination of dCTP to dUTP. This is dCTP deaminase from Helicobacter pylori (strain J99 / ATCC 700824) (Campylobacter pylori J99).